Reading from the N-terminus, the 194-residue chain is Peptidyl-tRNA hydrolase (194 aa).

Residue Tyr-16 participates in tRNA binding. His-21 (proton acceptor) is an active-site residue. Residues Phe-67, Asn-69, and Asn-115 each coordinate tRNA.

The protein belongs to the PTH family. In terms of assembly, monomer.

It is found in the cytoplasm. The enzyme catalyses an N-acyl-L-alpha-aminoacyl-tRNA + H2O = an N-acyl-L-amino acid + a tRNA + H(+). Functionally, hydrolyzes ribosome-free peptidyl-tRNAs (with 1 or more amino acids incorporated), which drop off the ribosome during protein synthesis, or as a result of ribosome stalling. Its function is as follows. Catalyzes the release of premature peptidyl moieties from peptidyl-tRNA molecules trapped in stalled 50S ribosomal subunits, and thus maintains levels of free tRNAs and 50S ribosomes. In Salmonella dublin (strain CT_02021853), this protein is Peptidyl-tRNA hydrolase.